The following is a 275-amino-acid chain: Digeranylgeranylglyceryl phosphate synthase (275 aa).

The next 8 helical transmembrane spans lie at 12 to 32, 35 to 55, 88 to 108, 125 to 145, 146 to 166, 200 to 220, 224 to 244, and 255 to 275; these read VHNV…ATTW, TPLF…GYVI, IVLF…PFGF, KLGL…AYYG, GLAS…IFFF, WIIA…PYFL, VIYL…LILH, and SLMK…SLRI.

The protein belongs to the UbiA prenyltransferase family. DGGGP synthase subfamily. Mg(2+) serves as cofactor.

It localises to the cell membrane. It catalyses the reaction sn-3-O-(geranylgeranyl)glycerol 1-phosphate + (2E,6E,10E)-geranylgeranyl diphosphate = 2,3-bis-O-(geranylgeranyl)-sn-glycerol 1-phosphate + diphosphate. It functions in the pathway membrane lipid metabolism; glycerophospholipid metabolism. In terms of biological role, prenyltransferase that catalyzes the transfer of the geranylgeranyl moiety of geranylgeranyl diphosphate (GGPP) to the C2 hydroxyl of (S)-3-O-geranylgeranylglyceryl phosphate (GGGP). This reaction is the second ether-bond-formation step in the biosynthesis of archaeal membrane lipids. This is Digeranylgeranylglyceryl phosphate synthase from Sulfolobus acidocaldarius (strain ATCC 33909 / DSM 639 / JCM 8929 / NBRC 15157 / NCIMB 11770).